A 456-amino-acid polypeptide reads, in one-letter code: Adenylosuccinate synthetase (456 aa).

GTP-binding positions include 11 to 17 (GDEGKGG) and 39 to 41 (GHT). Asp-12 serves as the catalytic Proton acceptor. 2 residues coordinate Mg(2+): Asp-12 and Gly-39. IMP is bound by residues 12–15 (DEGK), 37–40 (NAGH), Thr-127, Arg-141, Gln-232, Thr-247, and Arg-328. The active-site Proton donor is His-40. 324-330 (TVTGRPR) lines the substrate pocket. Residues Arg-330, 356-358 (HLD), and 441-443 (GVG) contribute to the GTP site.

Belongs to the adenylosuccinate synthetase family. In terms of assembly, homodimer. Mg(2+) is required as a cofactor.

It is found in the cytoplasm. The enzyme catalyses IMP + L-aspartate + GTP = N(6)-(1,2-dicarboxyethyl)-AMP + GDP + phosphate + 2 H(+). It participates in purine metabolism; AMP biosynthesis via de novo pathway; AMP from IMP: step 1/2. Its function is as follows. Plays an important role in the de novo pathway of purine nucleotide biosynthesis. Catalyzes the first committed step in the biosynthesis of AMP from IMP. This chain is Adenylosuccinate synthetase, found in Natronomonas pharaonis (strain ATCC 35678 / DSM 2160 / CIP 103997 / JCM 8858 / NBRC 14720 / NCIMB 2260 / Gabara) (Halobacterium pharaonis).